The following is a 921-amino-acid chain: Sodium/calcium exchanger 2 (921 aa).

Residues 1-20 form the signal peptide; sequence MAPLALMGVVLLLGVPHCLG. The segment at 23-42 is disordered; it reads TPTPSLPPPTANDSDASPEG. The helical transmembrane segment at 69–89 threads the bilayer; the sequence is VARAVVYFVAMVYMFLGVSII. 2 N-linked (GlcNAc...) asparagine glycosylation sites follow: Asn-125 and Asn-130. Helical transmembrane passes span 131-151, 165-185, 197-217, and 226-246; these read LTLMALGSSAPEILLTVIEVC, IVGSAAFNMFVVIAVCVYVIP, VFFVTASWSIFAYVWLYLILA, and VWEALLTLIFFPVCVVFAWMA. The tract at residues 248–267 is putative calmodulin-binding region; the sequence is KRLLFYKYVYKRYRTDPRSG. The segment at 371-391 is disordered; it reads HAADAARRPGATDGAPDDEDD. Calx-beta domains follow at residues 389–482 and 512–611; these read EDDG…FVRL and ATVT…FIEL. 14 residues coordinate Ca(2+): Glu-407, Asp-443, Asp-468, Asp-469, Ile-471, Glu-473, Glu-476, Asp-518, Asp-519, Asp-520, Glu-536, Asp-598, Glu-599, and Glu-600. Ser-622 bears the Phosphoserine mark. Residue Glu-665 participates in Ca(2+) binding. 6 helical membrane passes run 721–741, 749–769, 786–806, 823–843, 855–875, and 893–913; these read CFDYVMHFLTVFWKVLFACVP, WACFGVCILVIGVLTALIGDL, VVFVALGTSIPDTFASKVAAL, AVNVFLGLGVAWSVAAVYWAV, LAFSVTLFTVFAFVCIAVLLY, and LATTALFLGLWFLYILFSSLE.

The protein belongs to the Ca(2+):cation antiporter (CaCA) (TC 2.A.19) family. SLC8 subfamily. As to expression, detected in kidney cortex, in distal convoluted tubules and connecting segments. Detected in brain and spinal cord (at protein level). Detected in brain, especially in hippocampus CA1, CA2 and CA3 fiels, dentate gyrus, cerebellum and brain cortex.

It is found in the cell membrane. The protein resides in the basolateral cell membrane. The catalysed reaction is Ca(2+)(in) + 3 Na(+)(out) = Ca(2+)(out) + 3 Na(+)(in). With respect to regulation, calcium transport is down-regulated by Na(+) and stimulated by Ca(2+). Its function is as follows. Mediates the electrogenic exchange of Ca(2+) against Na(+) ions across the cell membrane, and thereby contributes to the regulation of cytoplasmic Ca(2+) levels and Ca(2+)-dependent cellular processes. Contributes to cellular Ca(2+) homeostasis in excitable cells. Contributes to the rapid decrease of cytoplasmic Ca(2+) levels back to baseline after neuronal activation, and thereby contributes to modulate synaptic plasticity, learning and memory. Plays a role in regulating urinary Ca(2+) and Na(+) excretion. The polypeptide is Sodium/calcium exchanger 2 (Mus musculus (Mouse)).